The sequence spans 125 residues: MRHRKSGRHLNRTSSHRKAMFKNMAASLFEHEVIKTTLPKAKELRRVAEPLITLAKVDSVANRRLAFARTRSKDAVGKLFSELGPRYQARPGGYVRILKCGFRSGDNAPMAYVELVDRPVAEAAE.

This sequence belongs to the bacterial ribosomal protein bL17 family. As to quaternary structure, part of the 50S ribosomal subunit. Contacts protein L32.

In Marinomonas sp. (strain MWYL1), this protein is Large ribosomal subunit protein bL17.